The sequence spans 253 residues: L-cysteine S-thiosulfotransferase subunit SoxA (253 aa).

The N-terminal stretch at M1–A17 is a signal peptide. The Cytochrome c domain maps to V44–S129. Residues C64, C67, H68, C102, C165, C168, and H169 each contribute to the heme c site. A substrate-binding site is contributed by R210. A heme c-binding site is contributed by C214. C214 serves as the catalytic Cysteine persulfide intermediate.

It belongs to the SoxA family. As to quaternary structure, heterodimer of SoxA and SoxX. Heme c is required as a cofactor. Cysteine persulfide at Cys-214.

The protein resides in the periplasm. The catalysed reaction is L-cysteinyl-[SoxY protein] + thiosulfate + 2 Fe(III)-[cytochrome c] = S-sulfosulfanyl-L-cysteinyl-[SoxY protein] + 2 Fe(II)-[cytochrome c] + 2 H(+). The enzyme catalyses S-sulfanyl-L-cysteinyl-[SoxY protein] + thiosulfate + 2 Fe(III)-[cytochrome c] = S-(2-sulfodisulfanyl)-L-cysteinyl-[SoxY protein] + 2 Fe(II)-[cytochrome c] + 2 H(+). C-type diheme cytochrome, which is part of the SoxAX cytochrome complex involved in sulfur oxidation. The SoxAX complex catalyzes the formation of a heterodisulfide bond between the conserved cysteine residue on a sulfur carrier SoxYZ complex subunit SoxY and thiosulfate or other inorganic sulfur substrates. This leads to the liberation of two electrons, which may be transferred from the SoxAX complex to another cytochrome c that then channels them into the respiratory electron transport chain. Some electrons may be used for reductive CO(2) fixation. In Hydrogenobacter thermophilus (strain DSM 6534 / IAM 12695 / TK-6), this protein is L-cysteine S-thiosulfotransferase subunit SoxA.